The sequence spans 82 residues: Small ribosomal subunit protein bS16 (82 aa).

It belongs to the bacterial ribosomal protein bS16 family.

This Vibrio cholerae serotype O1 (strain ATCC 39541 / Classical Ogawa 395 / O395) protein is Small ribosomal subunit protein bS16.